Consider the following 384-residue polypeptide: MFFFGDASTRPQIKFLCLFIYFIYMEEIFEKSQLENEQPTSKEPEPALKPVDVMSIKNAAQYVNQKLSAKGYFSNKPNKLRQLLLLSLDSSQLIPENAENFEISEKVYENDRNVMNIIYSLLNSAEISKQFKETALKKMADKDAEIELLKNEVEKLNKKVDEKERNIQSLQLDKIKSDLQAKHYQAMLNNVNAKNKEQERTFRLYAEEVKRELRRNEMEVDRLESRLSNMNKRRASPRDDAEAEPKRQKFDNDRFLSLVKENSHLQHDLNKLVGVLLRLQKFLKSFGQLNSNSKVPSTFIPTDSELLAIDHHNFDLQKYDLILFDLLKPLNGDSIDDTFKFKKNNQTDKDQEIASLRNRLSEMEQNYERVLATMEQWKTYRKQK.

Coiled coils occupy residues 132–236 (KETA…RRAS) and 342–379 (KKNN…QWKT). A disordered region spans residues 224–247 (ESRLSNMNKRRASPRDDAEAEPKR). Over residues 236–247 (SPRDDAEAEPKR) the composition is skewed to basic and acidic residues.

This sequence belongs to the ADIP family.

The protein resides in the preautophagosomal structure membrane. Functionally, specifically required for selective degradation of peroxisomes via macropexophagy. This is Autophagy-related protein 25 (ATG25) from Pichia angusta (Yeast).